A 239-amino-acid polypeptide reads, in one-letter code: tRNA (guanine-N(1)-)-methyltransferase (239 aa).

Residues glycine 110 and 130-135 (VGDYVL) contribute to the S-adenosyl-L-methionine site.

The protein belongs to the RNA methyltransferase TrmD family. Homodimer.

The protein resides in the cytoplasm. The catalysed reaction is guanosine(37) in tRNA + S-adenosyl-L-methionine = N(1)-methylguanosine(37) in tRNA + S-adenosyl-L-homocysteine + H(+). In terms of biological role, specifically methylates guanosine-37 in various tRNAs. In Borrelia hermsii (strain HS1 / DAH), this protein is tRNA (guanine-N(1)-)-methyltransferase.